A 251-amino-acid polypeptide reads, in one-letter code: Imidazole glycerol phosphate synthase subunit HisF (251 aa).

Residues aspartate 10 and aspartate 129 contribute to the active site.

Belongs to the HisA/HisF family. Heterodimer of HisH and HisF.

The protein localises to the cytoplasm. It catalyses the reaction 5-[(5-phospho-1-deoxy-D-ribulos-1-ylimino)methylamino]-1-(5-phospho-beta-D-ribosyl)imidazole-4-carboxamide + L-glutamine = D-erythro-1-(imidazol-4-yl)glycerol 3-phosphate + 5-amino-1-(5-phospho-beta-D-ribosyl)imidazole-4-carboxamide + L-glutamate + H(+). The protein operates within amino-acid biosynthesis; L-histidine biosynthesis; L-histidine from 5-phospho-alpha-D-ribose 1-diphosphate: step 5/9. In terms of biological role, IGPS catalyzes the conversion of PRFAR and glutamine to IGP, AICAR and glutamate. The HisF subunit catalyzes the cyclization activity that produces IGP and AICAR from PRFAR using the ammonia provided by the HisH subunit. This chain is Imidazole glycerol phosphate synthase subunit HisF, found in Cutibacterium acnes (strain DSM 16379 / KPA171202) (Propionibacterium acnes).